Consider the following 727-residue polypeptide: Beta-galactosidase 2 (727 aa).

The signal sequence occupies residues 1–27 (MSMHFRNKAWIILAILCFSSLIHSTEA). Glu185 acts as the Proton donor in catalysis. Glu254 functions as the Nucleophile in the catalytic mechanism. A glycan (N-linked (GlcNAc...) asparagine) is linked at Asn255.

It belongs to the glycosyl hydrolase 35 family. Ubiquitous, with higher expression levels in roots and siliques.

The protein resides in the secreted. It localises to the extracellular space. It is found in the apoplast. It catalyses the reaction Hydrolysis of terminal non-reducing beta-D-galactose residues in beta-D-galactosides.. In Arabidopsis thaliana (Mouse-ear cress), this protein is Beta-galactosidase 2 (BGAL2).